The chain runs to 105 residues: MVPGEIFFGEGDVEINAGARRLEMEIVNTGDRPVQVGSHVHLPQANAALDFDRTAARGHRLDVPAGTAVRFEPGVAQRVRLVPLGGSREVHGLSLNPPGRLDGAS.

The protein belongs to the urease beta subunit family. In terms of assembly, heterotrimer of UreA (gamma), UreB (beta) and UreC (alpha) subunits. Three heterotrimers associate to form the active enzyme.

The protein resides in the cytoplasm. The catalysed reaction is urea + 2 H2O + H(+) = hydrogencarbonate + 2 NH4(+). It participates in nitrogen metabolism; urea degradation; CO(2) and NH(3) from urea (urease route): step 1/1. The sequence is that of Urease subunit beta from Mycobacterium sp. (strain JLS).